We begin with the raw amino-acid sequence, 174 residues long: FMN reductase (NADH) SmoA (174 aa).

The protein belongs to the non-flavoprotein flavin reductase family.

The catalysed reaction is FMNH2 + NAD(+) = FMN + NADH + 2 H(+). In terms of biological role, part of the sulfoquinovose monooxygenase (sulfo-SMO) pathway, a D-sulfoquinovose degradation pathway that enables the complete utilization of all carbons within sulfoquinovose (SQ) with concomitant production of inorganic sulfite. Catalyzes the NADH-dependent reduction of FMN. FMNH(2) is then transferred to the sulfoquinovose monooxygenase SmoC. This is FMN reductase (NADH) SmoA from Agrobacterium fabrum (strain C58 / ATCC 33970) (Agrobacterium tumefaciens (strain C58)).